The primary structure comprises 202 residues: Putative 3-methyladenine DNA glycosylase (202 aa).

Belongs to the DNA glycosylase MPG family.

The sequence is that of Putative 3-methyladenine DNA glycosylase from Staphylococcus aureus (strain bovine RF122 / ET3-1).